The chain runs to 249 residues: O-methyltransferase adaD (249 aa).

The span at 1–15 shows a compositional bias: low complexity; sequence MSSVTLTTTTTTTST. A disordered region spans residues 1 to 26; sequence MSSVTLTTTTTTTSTPPKPTPKDEPQ.

It belongs to the methyltransferase superfamily.

The catalysed reaction is 2-acetyl-3,4a,8,10,11,12a-hexahydroxy-1,4,4a,5,12,12a-hexahydrotetracene-1,12-dione + S-adenosyl-L-methionine = TAN-1612 + S-adenosyl-L-homocysteine + H(+). Its pathway is secondary metabolite biosynthesis. In terms of biological role, O-methyltransferase; part of the gene cluster that mediates the biosynthesis of the linear tetracyclic TAN-1612 neuropeptide Y receptor antagonist. The decaketide backbone of TAN-1612 is synthesized by the non-reducing polyketide synthase adaA via condensation of one acetyl-CoA starter unit with 9 malonyl-CoA units. The FAD-dependent monooxygenase adaC then performs hydroxylation at C2 while the polaketide chain is still attached to the NRPKS adaA. The alpha-hydroxylation step at C2 appears to be crucial for the following C18-C1 Claisen cyclization and release of the C9-hydroxyl version of TAN-1612 from the NRPKS adaA, two steps performed by the lactamase-like protein adaB. Finally, the O-methyltransferase adaD performs the C9 O-methylation to complete the biosynthesis of TAN-1612. The protein is O-methyltransferase adaD of Aspergillus niger (strain ATCC MYA-4892 / CBS 513.88 / FGSC A1513).